The following is a 519-amino-acid chain: Aspartokinase (519 aa).

A Phosphoserine modification is found at Ser-326. Residue Thr-328 is modified to Phosphothreonine. The 83-residue stretch at Leu-436–Ser-518 folds into the ACT domain.

This sequence belongs to the aspartokinase family.

It catalyses the reaction L-aspartate + ATP = 4-phospho-L-aspartate + ADP. It functions in the pathway amino-acid biosynthesis; L-methionine biosynthesis via de novo pathway; L-homoserine from L-aspartate: step 1/3. Its pathway is amino-acid biosynthesis; L-threonine biosynthesis; L-threonine from L-aspartate: step 1/5. Its function is as follows. Phosphorylates aspartate, the first step in the biosynthesis of amino acids that derive from aspartate (the aspartate family of amino acids), including methioinine and threonine, the latter of which is a precursor to isoleucine. In Schizosaccharomyces pombe (strain 972 / ATCC 24843) (Fission yeast), this protein is Aspartokinase.